We begin with the raw amino-acid sequence, 789 residues long: Disintegrin and metalloproteinase domain-containing protein 7 (789 aa).

Positions methionine 1 to glycine 23 are cleaved as a signal peptide. A propeptide spanning residues valine 24–threonine 176 is cleaved from the precursor. Topologically, residues valine 24–serine 667 are extracellular. 3 N-linked (GlcNAc...) asparagine glycosylation sites follow: asparagine 84, asparagine 167, and asparagine 174. Residues lysine 199–proline 393 enclose the Peptidase M12B domain. Intrachain disulfides connect cysteine 310/cysteine 388, cysteine 350/cysteine 372, cysteine 352/cysteine 357, and cysteine 459/cysteine 479. Positions tyrosine 401 to asparagine 487 constitute a Disintegrin domain. Asparagine 583, asparagine 628, and asparagine 664 each carry an N-linked (GlcNAc...) asparagine glycan. A helical transmembrane segment spans residues valine 668–isoleucine 689. At arginine 690 to glycine 789 the chain is on the cytoplasmic side. Residues arginine 764 to glycine 789 form a disordered region. Over residues threonine 772–glycine 789 the composition is skewed to polar residues.

Interacts with ITM2B in sperm; the interaction increases following capacitation. Interacts with HSPA5 and CANX. In terms of tissue distribution, expressed in both the head and tails of sperm (at protein level). Expressed in the epididymis (at protein level). Abundantly expressed in the apical region of the proximal caput epididymal epithelium, with decreasing expression in the mid and distal caput epididymal epithelium.

Its subcellular location is the membrane. Functionally, required for normal male fertility via maintenance of epithelial cell morphology in the caput epididymis and subsequently correct epididymis lumen structure required for sperm development. Plays a role in sperm motility, flagella morphology and tyrosine phosphorylation during sperm capacitance. Plays a role in normal expression levels of HSPA5, ITM2B and ADAM2 in sperm both prior to and post-capacitation. This is a non catalytic metalloprotease-like protein. The chain is Disintegrin and metalloproteinase domain-containing protein 7 from Mus musculus (Mouse).